Here is a 333-residue protein sequence, read N- to C-terminus: 6-phosphogluconolactonase (333 aa).

This sequence belongs to the cycloisomerase 2 family.

It carries out the reaction 6-phospho-D-glucono-1,5-lactone + H2O = 6-phospho-D-gluconate + H(+). It functions in the pathway carbohydrate degradation; pentose phosphate pathway; D-ribulose 5-phosphate from D-glucose 6-phosphate (oxidative stage): step 2/3. In terms of biological role, catalyzes the hydrolysis of 6-phosphogluconolactone to 6-phosphogluconate. This is 6-phosphogluconolactonase from Yersinia enterocolitica serotype O:8 / biotype 1B (strain NCTC 13174 / 8081).